Reading from the N-terminus, the 200-residue chain is Pyridoxal 5'-phosphate synthase subunit PdxT (200 aa).

An L-glutamine-binding site is contributed by 52–54 (GES). Catalysis depends on Cys84, which acts as the Nucleophile. L-glutamine is bound by residues Arg116 and 145-146 (IR). Active-site charge relay system residues include His181 and Glu183.

The protein belongs to the glutaminase PdxT/SNO family. As to quaternary structure, in the presence of PdxS, forms a dodecamer of heterodimers. Only shows activity in the heterodimer.

It carries out the reaction aldehydo-D-ribose 5-phosphate + D-glyceraldehyde 3-phosphate + L-glutamine = pyridoxal 5'-phosphate + L-glutamate + phosphate + 3 H2O + H(+). It catalyses the reaction L-glutamine + H2O = L-glutamate + NH4(+). It participates in cofactor biosynthesis; pyridoxal 5'-phosphate biosynthesis. In terms of biological role, catalyzes the hydrolysis of glutamine to glutamate and ammonia as part of the biosynthesis of pyridoxal 5'-phosphate. The resulting ammonia molecule is channeled to the active site of PdxS. The sequence is that of Pyridoxal 5'-phosphate synthase subunit PdxT from Saccharolobus islandicus (strain M.16.27) (Sulfolobus islandicus).